We begin with the raw amino-acid sequence, 118 residues long: Large ribosomal subunit protein uL18 (118 aa).

The protein belongs to the universal ribosomal protein uL18 family. As to quaternary structure, part of the 50S ribosomal subunit; part of the 5S rRNA/L5/L18/L25 subcomplex. Contacts the 5S and 23S rRNAs.

In terms of biological role, this is one of the proteins that bind and probably mediate the attachment of the 5S RNA into the large ribosomal subunit, where it forms part of the central protuberance. This is Large ribosomal subunit protein uL18 from Rickettsia felis (strain ATCC VR-1525 / URRWXCal2) (Rickettsia azadi).